The sequence spans 137 residues: Basic phospholipase A2 homolog Cax-K49 (137 aa).

An N-terminal signal peptide occupies residues 1 to 16 (MRTFWIVAMLLVGVEG). 7 disulfide bridges follow: C42-C131, C44-C60, C59-C111, C65-C137, C66-C104, C73-C97, and C91-C102. Residues 121-133 (KKYKIYPKFLCKK) are important for membrane-damaging activities in eukaryotes and bacteria; heparin-binding.

Homodimer; non-covalently linked. As to expression, expressed by the venom gland.

It is found in the secreted. Its function is as follows. Snake venom phospholipase A2 homolog that lacks enzymatic activity. Displays edema-inducing activities and may be myotoxic. A model of myotoxic mechanism has been proposed: an apo Lys49-PLA2 is activated by the entrance of a hydrophobic molecule (e.g. fatty acid) at the hydrophobic channel of the protein leading to a reorientation of a monomer. This reorientation causes a transition between 'inactive' to 'active' states, causing alignment of C-terminal and membrane-docking sites (MDoS) side-by-side and putting the membrane-disruption sites (MDiS) in the same plane, exposed to solvent and in a symmetric position for both monomers. The MDoS region stabilizes the toxin on membrane by the interaction of charged residues with phospholipid head groups. Subsequently, the MDiS region destabilizes the membrane with penetration of hydrophobic residues. This insertion causes a disorganization of the membrane, allowing an uncontrolled influx of ions (i.e. calcium and sodium), and eventually triggering irreversible intracellular alterations and cell death. This chain is Basic phospholipase A2 homolog Cax-K49, found in Crotalus atrox (Western diamondback rattlesnake).